Consider the following 616-residue polypeptide: uncharacterized protein (616 aa).

This is an uncharacterized protein from Methanocaldococcus jannaschii (strain ATCC 43067 / DSM 2661 / JAL-1 / JCM 10045 / NBRC 100440) (Methanococcus jannaschii).